The sequence spans 170 residues: RNA pyrophosphohydrolase (170 aa).

In terms of domain architecture, Nudix hydrolase spans 6–149 (GFRPNVGIVI…KRDVYRRALK (144 aa)). Residues 38–59 (GGIDDGETPEQAMYRELYEEVG) carry the Nudix box motif.

Belongs to the Nudix hydrolase family. RppH subfamily. A divalent metal cation serves as cofactor.

Accelerates the degradation of transcripts by removing pyrophosphate from the 5'-end of triphosphorylated RNA, leading to a more labile monophosphorylated state that can stimulate subsequent ribonuclease cleavage. The protein is RNA pyrophosphohydrolase of Aliivibrio salmonicida (strain LFI1238) (Vibrio salmonicida (strain LFI1238)).